Reading from the N-terminus, the 229-residue chain is Large ribosomal subunit protein uL1 (229 aa).

It belongs to the universal ribosomal protein uL1 family. In terms of assembly, part of the 50S ribosomal subunit.

Binds directly to 23S rRNA. The L1 stalk is quite mobile in the ribosome, and is involved in E site tRNA release. In terms of biological role, protein L1 is also a translational repressor protein, it controls the translation of the L11 operon by binding to its mRNA. In Streptococcus gordonii (strain Challis / ATCC 35105 / BCRC 15272 / CH1 / DL1 / V288), this protein is Large ribosomal subunit protein uL1.